The chain runs to 63 residues: uncharacterized protein (63 aa).

The N-terminal stretch at 1–21 is a signal peptide; the sequence is MNRALILTFVLFFALFAISSA.

This is an uncharacterized protein from Dictyostelium discoideum (Social amoeba).